A 327-amino-acid polypeptide reads, in one-letter code: Phenylalanine--tRNA ligase alpha subunit (327 aa).

A Mg(2+)-binding site is contributed by Glu-252.

The protein belongs to the class-II aminoacyl-tRNA synthetase family. Phe-tRNA synthetase alpha subunit type 1 subfamily. Tetramer of two alpha and two beta subunits. The cofactor is Mg(2+).

It is found in the cytoplasm. The catalysed reaction is tRNA(Phe) + L-phenylalanine + ATP = L-phenylalanyl-tRNA(Phe) + AMP + diphosphate + H(+). This Proteus mirabilis (strain HI4320) protein is Phenylalanine--tRNA ligase alpha subunit.